We begin with the raw amino-acid sequence, 202 residues long: Matrix protein (202 aa).

Residues 35–38 (PPEY) carry the PPXY motif motif. Positions 115 to 151 (KLRRTFIFQWADSRGPLEGEELEYSQEITWDDDTEFV) are essential for glycoprotein binding.

Belongs to the lyssavirus matrix protein family. In terms of assembly, homomultimer. Interacts with nucleoprotein and with the cytoplasmic domain of glycoprotein. Interacts with host ATP6V1A; this interaction plays an important role in virion uncoating after viral entry.

The protein localises to the virion membrane. It is found in the host endomembrane system. The protein resides in the host cytoplasm. Its function is as follows. Plays a major role in assembly, budding and uncoating of virion after membrane fusion. Completely covers the ribonucleoprotein coil and keep it in condensed bullet-shaped form. Inhibits viral transcription and stimulates replication. Plays a major role in early induction of TRAIL-mediated apoptosis in infected neurons. Inhibits the integrated stress response (ISR) in the infected cell by blocking the formation of stress granules. The protein is Matrix protein (M) of Rabies virus (strain ERA) (RABV).